Consider the following 178-residue polypeptide: Large ribosomal subunit protein uL13m (178 aa).

Belongs to the universal ribosomal protein uL13 family. As to quaternary structure, component of the mitochondrial ribosome large subunit (39S) which comprises a 16S rRNA and about 50 distinct proteins.

The protein resides in the mitochondrion. This chain is Large ribosomal subunit protein uL13m (mRpL13), found in Drosophila melanogaster (Fruit fly).